Consider the following 344-residue polypeptide: Uroporphyrinogen decarboxylase (344 aa).

Substrate-binding positions include 26–30, Phe-45, Asp-75, Tyr-151, Ser-206, and His-320; that span reads RQAGR.

Belongs to the uroporphyrinogen decarboxylase family. In terms of assembly, homodimer.

Its subcellular location is the cytoplasm. The enzyme catalyses uroporphyrinogen III + 4 H(+) = coproporphyrinogen III + 4 CO2. The protein operates within porphyrin-containing compound metabolism; protoporphyrin-IX biosynthesis; coproporphyrinogen-III from 5-aminolevulinate: step 4/4. Its function is as follows. Catalyzes the decarboxylation of four acetate groups of uroporphyrinogen-III to yield coproporphyrinogen-III. The chain is Uroporphyrinogen decarboxylase from Staphylococcus epidermidis (strain ATCC 35984 / DSM 28319 / BCRC 17069 / CCUG 31568 / BM 3577 / RP62A).